A 30-amino-acid polypeptide reads, in one-letter code: L-serine dehydratase, alpha chain (30 aa).

The protein belongs to the iron-sulfur dependent L-serine dehydratase family. In terms of assembly, heterodimer of an alpha chain and a beta chain. [4Fe-4S] cluster serves as cofactor.

The catalysed reaction is L-serine = pyruvate + NH4(+). It participates in carbohydrate biosynthesis; gluconeogenesis. This is L-serine dehydratase, alpha chain from Anaerotignum propionicum (Clostridium propionicum).